Here is a 548-residue protein sequence, read N- to C-terminus: Probable malate:quinone oxidoreductase (548 aa).

A disordered region spans residues 521 to 548 (DKPQAADSTPKPQLKPQPVQKEVADIAL). Residues 530-541 (PKPQLKPQPVQK) show a composition bias toward low complexity.

The protein belongs to the MQO family. It depends on FAD as a cofactor.

The catalysed reaction is (S)-malate + a quinone = a quinol + oxaloacetate. Its pathway is carbohydrate metabolism; tricarboxylic acid cycle; oxaloacetate from (S)-malate (quinone route): step 1/1. The sequence is that of Probable malate:quinone oxidoreductase from Escherichia coli (strain 55989 / EAEC).